Consider the following 760-residue polypeptide: uncharacterized protein (760 aa).

An N-terminal signal peptide occupies residues 1–20; sequence MKFKLFLGSSFFGVATLLIA. Cys21 is lipidated: N-palmitoyl cysteine. Cys21 carries the S-diacylglycerol cysteine lipid modification. 3 disordered regions span residues 221 to 243, 272 to 315, and 705 to 741; these read ENAA…LQLK, AKTN…TSDD, and IKAT…NDKA. Basic and acidic residues predominate over residues 272 to 284; it reads AKTNGEKGNEKQE. The span at 300–312 shows a compositional bias: polar residues; it reads KNTSQDKTQNTQT. Positions 705-721 are enriched in basic and acidic residues; sequence IKATSKEGEQNQGKKGD.

This sequence belongs to the MG185/MG260 family.

It localises to the cell membrane. This is an uncharacterized protein from Mycoplasma pneumoniae (strain ATCC 29342 / M129 / Subtype 1) (Mycoplasmoides pneumoniae).